A 585-amino-acid polypeptide reads, in one-letter code: Lipoprotein LpqB (585 aa).

The signal sequence occupies residues 1–17 (MGRKLLGLLMLAVLLAG). Cysteine 18 carries N-palmitoyl cysteine lipidation. A lipid anchor (S-diacylglycerol cysteine) is attached at cysteine 18. 2 disordered regions span residues 24 to 46 (SSAP…KPTP) and 560 to 585 (PSAD…VLPG).

This sequence belongs to the LpqB lipoprotein family.

It localises to the cell membrane. The polypeptide is Lipoprotein LpqB (Mycobacterium paratuberculosis).